The sequence spans 395 residues: MPDSCCFQMDSGVSEPGEQDLTEAGAEQELRWLDLGSEEALGAGTQGPSTPQAWGHLLQAVWKGHTGLVTQLLRQGASVEERDGAGRTPLHLAVLRGHVSLVRLLLQRGAQVGAADRAGRTPLHEAAWHGPSRVAELLLRRGAPANARCLAGLTPLHWAAALGRTLMVGHLLAAPHPGPTAADARGWTAGHWAAAGGQMAVLELLGANGGARLDSVLLVAAAAGRATALRLLLAQGAPVDARDGVGATVLGVAAGLGRRQDMEVLLEHGADPSLTDRHGRSALHRAAAGGHLLAVQLLAAWGAEVDSQDLLGLTPLHHAARGGHIEVTGHLLDRGAEINAAGWLHKTPLHLAMEHGHGPTAELLLSRGASPTLRTRWGDMAQDLWPALCGEQEES.

ANK repeat units lie at residues 52-81 (QAWGHLLQAVWKGHTGLVTQLLRQGASVEE), 85-114 (AGRTPLHLAVLRGHVSLVRLLLQRGAQVGA), 118-147 (AGRTPLHEAAWHGPSRVAELLLRRGAPANA), 151-180 (AGLTPLHWAAALGRTLMVGHLLAAPHPGPT), 185-212 (RGWTAGHWAAAGGQMAVLELLGANGGAR), 213-241 (LDSVLLVAAAAGRATALRLLLAQGAPVDA), 245-274 (VGATVLGVAAGLGRRQDMEVLLEHGADPSL), 278-307 (HGRSALHRAAAGGHLLAVQLLAAWGAEVDS), 311-340 (LGLTPLHHAARGGHIEVTGHLLDRGAEINA), and 344-373 (LHKTPLHLAMEHGHGPTAELLLSRGASPTL).

The chain is Ankyrin repeat domain-containing protein 65 (ANKRD65) from Bos taurus (Bovine).